The following is a 373-amino-acid chain: Chaperone protein DnaJ (373 aa).

The region spanning 5–70 (DYYEVLGVHR…QQRVIYDQYG (66 aa)) is the J domain. The segment at 136–214 (GLETKIQIPR…CHGSGRVRGK (79 aa)) adopts a CR-type zinc-finger fold. Zn(2+) is bound by residues cysteine 149, cysteine 152, cysteine 166, cysteine 169, cysteine 188, cysteine 191, cysteine 202, and cysteine 205. CXXCXGXG motif repeat units lie at residues 149–156 (CGTCDGIG), 166–173 (CPTCQGAG), 188–195 (CPECNGEG), and 202–209 (CEECHGSG).

Belongs to the DnaJ family. Homodimer. It depends on Zn(2+) as a cofactor.

Its subcellular location is the cytoplasm. Its function is as follows. Participates actively in the response to hyperosmotic and heat shock by preventing the aggregation of stress-denatured proteins and by disaggregating proteins, also in an autonomous, DnaK-independent fashion. Unfolded proteins bind initially to DnaJ; upon interaction with the DnaJ-bound protein, DnaK hydrolyzes its bound ATP, resulting in the formation of a stable complex. GrpE releases ADP from DnaK; ATP binding to DnaK triggers the release of the substrate protein, thus completing the reaction cycle. Several rounds of ATP-dependent interactions between DnaJ, DnaK and GrpE are required for fully efficient folding. Also involved, together with DnaK and GrpE, in the DNA replication of plasmids through activation of initiation proteins. This is Chaperone protein DnaJ from Syntrophotalea carbinolica (strain DSM 2380 / NBRC 103641 / GraBd1) (Pelobacter carbinolicus).